A 357-amino-acid polypeptide reads, in one-letter code: Palmitoyltransferase ZDHHC20-A (357 aa).

Over 1–14 (MAPSHAVRCCQRGL) the chain is Cytoplasmic. A helical membrane pass occupies residues 15–35 (SWIPVIFINLVVCWSYYAYVV). The Lumenal portion of the chain corresponds to 36-50 (ELCIYTIPNVNEQVI). The chain crosses the membrane as a helical span at residues 51 to 71 (YLVVFHAFFFMFMWSYWKTIS). Residues 72–166 (SKPTNPSKEF…NNCVGFSNYK (95 aa)) are Cytoplasmic-facing. Residues 123-173 (RYCDRCQLIKPDRCHHCSTCDKCVLKMDHHCPWVNNCVGFSNYKFFVLFLA) form the DHHC domain. Cys-153 (S-palmitoyl cysteine intermediate) is an active-site residue. Residues 167–187 (FFVLFLAYSMLYCVYIAATVL) traverse the membrane as a helical segment. The Lumenal segment spans residues 188–204 (QYFIKFWTNQLPDTHAK). A helical membrane pass occupies residues 205 to 228 (FHVLFLFFVAAMFFISILSLFSYH). Residues 229–357 (LWLVGKNRTT…PVCVTLENES (129 aa)) lie on the Cytoplasmic side of the membrane.

It belongs to the DHHC palmitoyltransferase family.

It is found in the golgi apparatus membrane. Its subcellular location is the cell membrane. The protein localises to the cytoplasm. The protein resides in the perinuclear region. It localises to the endoplasmic reticulum membrane. It is found in the endoplasmic reticulum-Golgi intermediate compartment membrane. It carries out the reaction L-cysteinyl-[protein] + hexadecanoyl-CoA = S-hexadecanoyl-L-cysteinyl-[protein] + CoA. The catalysed reaction is L-cysteinyl-[protein] + tetradecanoyl-CoA = S-tetradecanoyl-L-cysteinyl-[protein] + CoA. It catalyses the reaction L-cysteinyl-[protein] + octadecanoyl-CoA = S-octadecanoyl-L-cysteinyl-[protein] + CoA. In terms of biological role, palmitoyltransferase that could catalyze the addition of palmitate onto various protein substrates. Catalyzes palmitoylation of Cys residues on protein substrates and has a preference for acyl-CoA with C16 fatty acid chains but may also utilize acyl-CoA with C14 and C18 fatty acid chains. The sequence is that of Palmitoyltransferase ZDHHC20-A from Danio rerio (Zebrafish).